Consider the following 140-residue polypeptide: Lysozyme B (140 aa).

Positions 1-18 are cleaved as a signal peptide; that stretch reads MKAFIVLVALALAAPALG. The region spanning 19-140 is the C-type lysozyme domain; that stretch reads RTMDRCSLAR…GWLPSIDDCF (122 aa). Intrachain disulfides connect Cys-24–Cys-139, Cys-45–Cys-129, Cys-80–Cys-96, and Cys-92–Cys-110. Residues Glu-50 and Asp-68 contribute to the active site.

It belongs to the glycosyl hydrolase 22 family. Found in the midgut.

The catalysed reaction is Hydrolysis of (1-&gt;4)-beta-linkages between N-acetylmuramic acid and N-acetyl-D-glucosamine residues in a peptidoglycan and between N-acetyl-D-glucosamine residues in chitodextrins.. Unlikely to play an active role in the humoral immune defense. May have a function in the digestion of bacteria in the food. This Drosophila melanogaster (Fruit fly) protein is Lysozyme B (LysB).